Here is a 412-residue protein sequence, read N- to C-terminus: Maintenance of mitochondrial morphology protein 1 (412 aa).

Residues 1–81 lie on the Lumenal side of the membrane; it reads MTKELIKTEA…PANNWTFTQG (81 aa). Residues 82–102 traverse the membrane as a helical segment; that stretch reads LVLGQISVIFIIIVFVKFFVF. Residues 103 to 412 are Cytoplasmic-facing; the sequence is ADSSTIPTKK…RSDSGTSENL (310 aa). The SMP-LTD domain maps to 165–382; the sequence is SPESLDWFNV…EPRFQVVRLP (218 aa). The segment at 389-412 is disordered; that stretch reads KNTREPINKKTSVSRSDSGTSENL. Residues 397 to 412 show a composition bias toward polar residues; that stretch reads KKTSVSRSDSGTSENL.

This sequence belongs to the MMM1 family. In terms of assembly, homodimer. Component of the ER-mitochondria encounter structure (ERMES) or MDM complex, composed of MMM1, MDM10, MDM12 and MDM34. An MMM1 homodimer associates with one molecule of MDM12 on each side in a pairwise head-to-tail manner, and the SMP-LTD domains of MMM1 and MDM12 generate a continuous hydrophobic tunnel for phospholipid trafficking.

It localises to the endoplasmic reticulum membrane. Its function is as follows. Component of the ERMES/MDM complex, which serves as a molecular tether to connect the endoplasmic reticulum (ER) and mitochondria. Components of this complex are involved in the control of mitochondrial shape and protein biogenesis, and function in nonvesicular lipid trafficking between the ER and mitochondria. The MDM12-MMM1 subcomplex functions in the major beta-barrel assembly pathway that is responsible for biogenesis of all outer membrane beta-barrel proteins, and acts in a late step after the SAM complex. The MDM10-MDM12-MMM1 subcomplex further acts in the TOM40-specific pathway after the action of the MDM12-MMM1 complex. Essential for establishing and maintaining the structure of mitochondria and maintenance of mtDNA nucleoids. In Candida tropicalis (strain ATCC MYA-3404 / T1) (Yeast), this protein is Maintenance of mitochondrial morphology protein 1.